The chain runs to 184 residues: ATP synthase subunit b, chloroplastic (184 aa).

A helical membrane pass occupies residues 27–49 (LATNPINLSVVLGVLIFFGKGVL).

Belongs to the ATPase B chain family. As to quaternary structure, F-type ATPases have 2 components, F(1) - the catalytic core - and F(0) - the membrane proton channel. F(1) has five subunits: alpha(3), beta(3), gamma(1), delta(1), epsilon(1). F(0) has four main subunits: a(1), b(1), b'(1) and c(10-14). The alpha and beta chains form an alternating ring which encloses part of the gamma chain. F(1) is attached to F(0) by a central stalk formed by the gamma and epsilon chains, while a peripheral stalk is formed by the delta, b and b' chains.

It localises to the plastid. Its subcellular location is the chloroplast thylakoid membrane. F(1)F(0) ATP synthase produces ATP from ADP in the presence of a proton or sodium gradient. F-type ATPases consist of two structural domains, F(1) containing the extramembraneous catalytic core and F(0) containing the membrane proton channel, linked together by a central stalk and a peripheral stalk. During catalysis, ATP synthesis in the catalytic domain of F(1) is coupled via a rotary mechanism of the central stalk subunits to proton translocation. In terms of biological role, component of the F(0) channel, it forms part of the peripheral stalk, linking F(1) to F(0). This chain is ATP synthase subunit b, chloroplastic, found in Oenothera elata subsp. hookeri (Hooker's evening primrose).